Reading from the N-terminus, the 502-residue chain is Probable cytosol aminopeptidase (502 aa).

2 residues coordinate Mn(2+): Lys-269 and Asp-274. Lys-281 is an active-site residue. Residues Asp-292, Asp-351, and Glu-353 each contribute to the Mn(2+) site. The active site involves Arg-355.

It belongs to the peptidase M17 family. Requires Mn(2+) as cofactor.

The protein localises to the cytoplasm. It catalyses the reaction Release of an N-terminal amino acid, Xaa-|-Yaa-, in which Xaa is preferably Leu, but may be other amino acids including Pro although not Arg or Lys, and Yaa may be Pro. Amino acid amides and methyl esters are also readily hydrolyzed, but rates on arylamides are exceedingly low.. The enzyme catalyses Release of an N-terminal amino acid, preferentially leucine, but not glutamic or aspartic acids.. Functionally, presumably involved in the processing and regular turnover of intracellular proteins. Catalyzes the removal of unsubstituted N-terminal amino acids from various peptides. This Vibrio campbellii (strain ATCC BAA-1116) protein is Probable cytosol aminopeptidase.